Reading from the N-terminus, the 207-residue chain is Small ribosomal subunit protein uS4 (207 aa).

The disordered stretch occupies residues 31–51 (KCKLDSKPGQHGRTSGARTSD). Residues 97–162 (SRLDNVVYRM…QGRIRESLDL (66 aa)) form the S4 RNA-binding domain.

The protein belongs to the universal ribosomal protein uS4 family. In terms of assembly, part of the 30S ribosomal subunit. Contacts protein S5. The interaction surface between S4 and S5 is involved in control of translational fidelity.

Its function is as follows. One of the primary rRNA binding proteins, it binds directly to 16S rRNA where it nucleates assembly of the body of the 30S subunit. In terms of biological role, with S5 and S12 plays an important role in translational accuracy. This is Small ribosomal subunit protein uS4 from Bordetella bronchiseptica (strain ATCC BAA-588 / NCTC 13252 / RB50) (Alcaligenes bronchisepticus).